The chain runs to 842 residues: Microcephalin (842 aa).

The BRCT 1 domain maps to 1–93 (MAAPILKDVV…AHIDESLFPA (93 aa)). Phosphoserine is present on residues Ser279, Ser287, Ser296, and Ser333. Phosphothreonine is present on Thr335. The segment covering 346–359 (HSRPRSSSVKRKRV) has biased composition (basic residues). Disordered stretches follow at residues 346–375 (HSRP…KRKR), 418–443 (PDNL…AQFS), and 563–624 (VGLK…PTRR). Polar residues-rich tracts occupy residues 434-443 (QLPSNPAQFS) and 566-582 (KSTQ…NSSE). Residues 586–608 (PSEHEPRSVVDCNVERSAEEKEN) show a composition bias toward basic and acidic residues. BRCT domains follow at residues 647 to 737 (SGKG…PFEL) and 758 to 840 (YRGT…NYLL).

Interacts with CDC27 and maybe other components of the APC/C complex. Interacts with histone variant H2AX under DNA damage conditions.

It localises to the cytoplasm. It is found in the cytoskeleton. The protein resides in the microtubule organizing center. The protein localises to the centrosome. Its function is as follows. Implicated in chromosome condensation and DNA damage induced cellular responses. May play a role in neurogenesis and regulation of the size of the cerebral cortex. This is Microcephalin from Macaca fascicularis (Crab-eating macaque).